The primary structure comprises 249 residues: Phosphate import ATP-binding protein PstB 2 (249 aa).

The ABC transporter domain occupies 4-244 (IEVRDLDLFY…PKDKRTEDYI (241 aa)). 36–43 (GPSGCGKS) provides a ligand contact to ATP.

It belongs to the ABC transporter superfamily. Phosphate importer (TC 3.A.1.7) family. In terms of assembly, the complex is composed of two ATP-binding proteins (PstB), two transmembrane proteins (PstC and PstA) and a solute-binding protein (PstS).

The protein resides in the cell membrane. It carries out the reaction phosphate(out) + ATP + H2O = ADP + 2 phosphate(in) + H(+). Part of the ABC transporter complex PstSACB involved in phosphate import. Responsible for energy coupling to the transport system. This chain is Phosphate import ATP-binding protein PstB 2, found in Caldanaerobacter subterraneus subsp. tengcongensis (strain DSM 15242 / JCM 11007 / NBRC 100824 / MB4) (Thermoanaerobacter tengcongensis).